The following is a 163-amino-acid chain: uncharacterized protein (163 aa).

Transmembrane regions (helical) follow at residues 19–39, 63–83, 87–107, and 119–139; these read GPPS…SEGI, FFAD…LLGL, VAAV…KLRA, and FWGM…LIFL.

It belongs to the DoxX family.

It is found in the cell membrane. This is an uncharacterized protein from Mycobacterium tuberculosis (strain ATCC 25618 / H37Rv).